The chain runs to 480 residues: MALTQGTKRKVCYYYDGDVGNYYYGQGHPMKPHRIRMTHNLLLNYGLYRKMEIYRPHKANAEEMTKYHSDDYIKFLRSIRPDNMSEYSKQMQRFNVGEDCPVFDGLFEFCQLSAGGSVASAVKLNKQQTDIAVNWAGGLHHAKKSEASGFCYVNDIVLAILELLKYHQRVLYIDIDIHHGDGVEEAFYTTDRVMTVSFHKYGEYFPGTGDLRDIGAGKGKYYAVNYPLRDGIDDESYEAIFKPVISKVMETFQPSAVVLQCGSDSLSGDRLGCFNLTIKGHAKCVEFVKSFNLPMLMLGGGGYTIRNVARCWTYETAVALDTEIPNELPYNDYFEYFGPDFKLHISPSNMTNQNTNEYLEKIKQRLFENLRMLPHAPGVQMQPIPEDAVQEDSGDEEEEDPEKRISIRNSDKRISCDEEFSDSEDEGEGGRKNVANFKKAKRVKTEEEKEEEEKKDEKEEEKAKEEKAEPKGVKEETKST.

The interval 9–321 is histone deacetylase; the sequence is RKVCYYYDGD…WTYETAVALD (313 aa). Gly27 and Lys31 together coordinate 1D-myo-inositol 1,4,5,6-tetrakisphosphate. The active site involves His141. Zn(2+)-binding residues include Asp176, His178, and Asp264. Arg270 lines the 1D-myo-inositol 1,4,5,6-tetrakisphosphate pocket. The interval 376–480 is disordered; the sequence is APGVQMQPIP…KGVKEETKST (105 aa). A compositionally biased stretch (acidic residues) spans 388 to 400; that stretch reads AVQEDSGDEEEED. Over residues 401-416 the composition is skewed to basic and acidic residues; sequence PEKRISIRNSDKRISC. Positions 417-427 are enriched in acidic residues; sequence DEEFSDSEDEG. The span at 455–480 shows a compositional bias: basic and acidic residues; it reads KDEKEEEKAKEEKAEPKGVKEETKST.

The protein belongs to the histone deacetylase family. HD type 1 subfamily. The cofactor is Zn(2+).

The protein localises to the nucleus. The enzyme catalyses N(6)-acetyl-L-lysyl-[histone] + H2O = L-lysyl-[histone] + acetate. It catalyses the reaction N(6)-acetyl-L-lysyl-[protein] + H2O = L-lysyl-[protein] + acetate. The catalysed reaction is N(6)-(2E)-butenoyl-L-lysyl-[protein] + H2O = (2E)-2-butenoate + L-lysyl-[protein]. It carries out the reaction N(6)-[(S)-lactoyl]-L-lysyl-[protein] + H2O = (S)-lactate + L-lysyl-[protein]. Inositol tetraphosphate (1D-myo-inositol 1,4,5,6-tetrakisphosphate) may act as an intermolecular glue between HDAC1 and N-Cor repressor complex components. In terms of biological role, histone deacetylase that catalyzes the deacetylation of lysine residues on the N-terminal part of the core histones (H2A, H2B, H3 and H4). Histone deacetylation gives a tag for epigenetic repression and plays an important role in transcriptional regulation, cell cycle progression and developmental events. Histone deacetylases act via the formation of large multiprotein complexes. Also functions as a deacetylase for non-histone proteins. In addition to protein deacetylase activity, also has protein-lysine deacylase activity: acts as a protein decrotonylase and delactylase by mediating decrotonylation ((2E)-butenoyl) and delactylation (lactoyl) of histones, respectively. This chain is Histone deacetylase 1 (HDAC1), found in Gallus gallus (Chicken).